The following is a 387-amino-acid chain: Signal-regulatory protein gamma (387 aa).

Positions 1–28 (MPVPASWPHPPGPFLLLTLLLGLTEVAG) are cleaved as a signal peptide. An Ig-like V-type domain is found at 29–137 (EEELQMIQPE…ENVEFKSGPG (109 aa)). Topologically, residues 29 to 360 (EEELQMIQPE…QKDQSSDATP (332 aa)) are extracellular. 2 cysteine pairs are disulfide-bonded: C53-C119 and C168-C226. Ig-like C1-type domains follow at residues 146 to 245 (PSAP…ANLS) and 252 to 340 (PTLE…LAVS). N-linked (GlcNAc...) asparagine glycosylation is found at N243, N268, N309, and N317. Residues C271 and C329 are joined by a disulfide bond. A helical transmembrane segment spans residues 361-383 (GPASSLTALLLIAVLLGPIYVPW). The Cytoplasmic portion of the chain corresponds to 384 to 387 (KQKT).

In terms of assembly, interacts with CD47. In terms of tissue distribution, detected in liver, and at very low levels in brain, heart, lung, pancreas, kidney, placenta and skeletal muscle. Expressed on CD4+ T-cells, CD8+ T-cells, CD56-bright natural killer (NK) cells, CD20+ cells, and all activated NK cells. Mainly present in the paracortical T-cell area of lymph nodes, with only sparse positive cells in the mantle and in the germinal center of B-cell follicles. In the thymus, primarily expressed in the medulla on mature T-lymphocytes that have undergone thymic selection.

The protein resides in the membrane. In terms of biological role, probable immunoglobulin-like cell surface receptor. On binding with CD47, mediates cell-cell adhesion. Engagement on T-cells by CD47 on antigen-presenting cells results in enhanced antigen-specific T-cell proliferation and costimulates T-cell activation. This is Signal-regulatory protein gamma (SIRPG) from Homo sapiens (Human).